The chain runs to 91 residues: Small ribosomal subunit protein uS19 (91 aa).

This sequence belongs to the universal ribosomal protein uS19 family.

Functionally, protein S19 forms a complex with S13 that binds strongly to the 16S ribosomal RNA. This Sulfurimonas denitrificans (strain ATCC 33889 / DSM 1251) (Thiomicrospira denitrificans (strain ATCC 33889 / DSM 1251)) protein is Small ribosomal subunit protein uS19.